Reading from the N-terminus, the 213-residue chain is 5-deoxy-D-ribulose 1-phosphate aldolase (213 aa).

Substrate-binding positions include 28–29, 45–46, and 74–76; these read GN, SG, and SSE. The active-site Proton donor/acceptor is Glu76. Residues Glu76, His95, His97, and His157 each contribute to the Mn(2+) site.

The protein belongs to the aldolase class II family. In terms of assembly, forms homooligomers, possibly homotetramers. It depends on Mn(2+) as a cofactor.

The enzyme catalyses 5-deoxy-D-ribulose 1-phosphate = dihydroxyacetone phosphate + acetaldehyde. It functions in the pathway carbohydrate degradation. Functionally, catalyzes the cleavage of 5-deoxy-D-ribulose 1-phosphate to yield dihydroxyacetone phosphate (DHAP) and acetaldehyde, as part of a 5-deoxyribose salvage pathway that recycles this toxic radical SAM enzyme by-product to mainstream metabolites. Is also able to catalyze the reverse reaction, using several aldehydes as substrate, with acetaldehyde being the preferred substrate. In Bacillus thuringiensis serovar kurstaki (strain ATCC 35866 / NRRL B-4488 / HD73), this protein is 5-deoxy-D-ribulose 1-phosphate aldolase.